Here is a 134-residue protein sequence, read N- to C-terminus: Profilin-2 (134 aa).

C13 and C118 are joined by a disulfide. The Involved in PIP2 interaction signature appears at 84–100 (AVIRGKKGSGGITIKKT). The residue at position 114 (T114) is a Phosphothreonine.

Belongs to the profilin family. Occurs in many kinds of cells as a complex with monomeric actin in a 1:1 ratio. Post-translationally, phosphorylated by MAP kinases.

Its subcellular location is the cytoplasm. The protein localises to the cytoskeleton. Functionally, binds to actin and affects the structure of the cytoskeleton. At high concentrations, profilin prevents the polymerization of actin, whereas it enhances it at low concentrations. This Olea europaea (Common olive) protein is Profilin-2.